A 247-amino-acid polypeptide reads, in one-letter code: Probable dihydroorotate dehydrogenase B (NAD(+)), electron transfer subunit (247 aa).

The 87-residue stretch at 1–87 (MLRRVSIEET…RGPYGHGFSG (87 aa)) folds into the FAD-binding FR-type domain. The [2Fe-2S] cluster site is built by Cys-201, Cys-206, Cys-209, and Cys-217.

The protein belongs to the PyrK family. In terms of assembly, heterotetramer of 2 PyrK and 2 PyrD type B subunits. Requires [2Fe-2S] cluster as cofactor. The cofactor is FAD.

It functions in the pathway pyrimidine metabolism; UMP biosynthesis via de novo pathway; orotate from (S)-dihydroorotate (NAD(+) route): step 1/1. In terms of biological role, responsible for channeling the electrons from the oxidation of dihydroorotate from the FMN redox center in the PyrD type B subunit to the ultimate electron acceptor NAD(+). In Pyrococcus furiosus (strain ATCC 43587 / DSM 3638 / JCM 8422 / Vc1), this protein is Probable dihydroorotate dehydrogenase B (NAD(+)), electron transfer subunit.